We begin with the raw amino-acid sequence, 303 residues long: MAVTKELLQMDLYALLGIEEKAADKEVKKAYRQKALSCHPDKNPDNPRAAELFHQLSQALEVLTDAAARAAYDKVRKAKKQAAERTQRLDENRKKVKLDLEARERQAQAHGSEEEEESRSATTLEQEIARLREEGSRQLEEQQRLIQEQIRQDREQRLRGRTENTEGKGTPKLKLKWKCKKEDESQGGYSRDVLLRLLQKYGEVLNLVLSRKKAGNAIVEFATVRAAELAVRNEVGLADNPLKVSWLEGQPQSTVDPGPPGLSKGSVLSERDFESLVMMRMRQAAERQQLIAQMQQEDEGRPT.

One can recognise a J domain in the interval 11 to 76 (DLYALLGIEE…AARAAYDKVR (66 aa)). Disordered regions lie at residues 104 to 123 (ERQA…SATT) and 150 to 170 (IRQD…GKGT). Residue S112 is modified to Phosphoserine. Over residues 150 to 166 (IRQDREQRLRGRTENTE) the composition is skewed to basic and acidic residues. One can recognise an RRM domain in the interval 178–249 (KCKKEDESQG…NPLKVSWLEG (72 aa)). An N6-methyllysine modification is found at K264.

Expressed in the thyroid gland.

It localises to the cytoplasm. It is found in the nucleus. May negatively affect PAX8-induced thyroglobulin/TG transcription. This Mus musculus (Mouse) protein is DnaJ homolog subfamily C member 17 (Dnajc17).